The primary structure comprises 496 residues: MENIRVRFAPSPTGPLHIGGARSALFNFLLARRFGGQFIVRVEDTDLERSSRESEDNILDALEWLGITWDEGIRVGGPHAPYRQTERLHTYREAADKLLAEGKAYRCYCSEEELEAERQAFAEKGELPRYSGRCRSLSADDEARLRAEGRKPVIRFRVPDEGAVAIDDLVRGHVSFECAGIGDFIIVKSDGIPTYNFAVVIDDAQMAITHVIRGEEHLSNTPRQLLIYDALGLTPPKFAHVSLILGKDRSKMSKRHGSTSVVAYQRQGYLPEALVNFLVLLGWSPGGEEEIFSLDDLIAQFSLDRVAKSPAVFDFEKLNWINGVYLRKADLDRLVALAMPHLIEAGVVQEPLDEAAARKVRYMVQAIQEKVSYMAQIVDFIPLFFGDAITFESDEAKAVLTEEQVPKVLKACLRKLTEGRDLTPDNVKAMLKEVTKETKEKGRNVFMPIRVALTGQQHGPDLNALITALGREGAVNRIRRAAELAGVALGSSPFSC.

The 'HIGH' region motif lies at 10–20; it reads PSPTGPLHIGG. The short motif at 251–255 is the 'KMSKS' region element; sequence KMSKR. An ATP-binding site is contributed by Lys254.

This sequence belongs to the class-I aminoacyl-tRNA synthetase family. Glutamate--tRNA ligase type 1 subfamily. In terms of assembly, monomer.

The protein resides in the cytoplasm. The catalysed reaction is tRNA(Glu) + L-glutamate + ATP = L-glutamyl-tRNA(Glu) + AMP + diphosphate. In terms of biological role, catalyzes the attachment of glutamate to tRNA(Glu) in a two-step reaction: glutamate is first activated by ATP to form Glu-AMP and then transferred to the acceptor end of tRNA(Glu). This Heliobacterium modesticaldum (strain ATCC 51547 / Ice1) protein is Glutamate--tRNA ligase.